The following is a 329-amino-acid chain: Glycerol-3-phosphate dehydrogenase [NAD(P)+] (329 aa).

NADPH contacts are provided by tryptophan 11 and lysine 101. Residues lysine 101, glycine 132, and serine 134 each contribute to the sn-glycerol 3-phosphate site. Alanine 136 contributes to the NADPH binding site. Lysine 188, aspartate 241, serine 251, arginine 252, and asparagine 253 together coordinate sn-glycerol 3-phosphate. Lysine 188 acts as the Proton acceptor in catalysis. Arginine 252 is an NADPH binding site. Glutamate 278 is an NADPH binding site.

It belongs to the NAD-dependent glycerol-3-phosphate dehydrogenase family.

It localises to the cytoplasm. The catalysed reaction is sn-glycerol 3-phosphate + NAD(+) = dihydroxyacetone phosphate + NADH + H(+). It catalyses the reaction sn-glycerol 3-phosphate + NADP(+) = dihydroxyacetone phosphate + NADPH + H(+). The protein operates within membrane lipid metabolism; glycerophospholipid metabolism. Its function is as follows. Catalyzes the reduction of the glycolytic intermediate dihydroxyacetone phosphate (DHAP) to sn-glycerol 3-phosphate (G3P), the key precursor for phospholipid synthesis. In Onion yellows phytoplasma (strain OY-M), this protein is Glycerol-3-phosphate dehydrogenase [NAD(P)+].